Here is a 443-residue protein sequence, read N- to C-terminus: ATP-dependent protease ATPase subunit HslU (443 aa).

ATP contacts are provided by residues isoleucine 18, 60–65 (GVGKTE), aspartate 256, glutamate 321, and arginine 393.

It belongs to the ClpX chaperone family. HslU subfamily. A double ring-shaped homohexamer of HslV is capped on each side by a ring-shaped HslU homohexamer. The assembly of the HslU/HslV complex is dependent on binding of ATP.

Its subcellular location is the cytoplasm. Functionally, ATPase subunit of a proteasome-like degradation complex; this subunit has chaperone activity. The binding of ATP and its subsequent hydrolysis by HslU are essential for unfolding of protein substrates subsequently hydrolyzed by HslV. HslU recognizes the N-terminal part of its protein substrates and unfolds these before they are guided to HslV for hydrolysis. This chain is ATP-dependent protease ATPase subunit HslU, found in Histophilus somni (strain 2336) (Haemophilus somnus).